The following is a 936-amino-acid chain: Sine oculis-binding protein homolog A (936 aa).

Positions 1–14 (MAEMEKEGRPPESK) are enriched in basic and acidic residues. 2 disordered regions span residues 1–46 (MAEM…GQAG) and 108–151 (ASTL…HGGL). A compositionally biased stretch (polar residues) spans 108 to 144 (ASTLENSSGSPPHANSSGSTPTSRNGVTAESSVNPSS). 2 consecutive FCS-type zinc fingers follow at residues 169-207 (EDSSNVQIMCAWCQKVGVKRYSLSMGSELKSFCSEKCFA) and 247-287 (LKTN…KCLN). Disordered stretches follow at residues 311–330 (LPTSDTKSESGAGVQLLTPE), 336–424 (LSEL…VMTP), 486–511 (SPHLHPSSTPTLSGNPPGIMPPHPAA), 574–632 (NPQR…KQTE), 697–727 (PPPALLGETELDGSTSISTGTAKDDHRDTYS), and 842–877 (DSAGKRCSNDQSAITTGTGDDKSQSPEDDPSGEDHA). The segment covering 349-382 (GATIAGPSGSTSGSPSEAGTVCSSSSSSSSSSSS) has biased composition (low complexity). Pro residues predominate over residues 395-404 (SLPPPHPPPI). Polar residues-rich tracts occupy residues 617–632 (PPNSDTLSPEFSKQTE), 708–717 (DGSTSISTGT), and 850–859 (NDQSAITTGT).

This sequence belongs to the SOBP family.

Its function is as follows. Implicated in development of the cochlea. The sequence is that of Sine oculis-binding protein homolog A (sobpa) from Danio rerio (Zebrafish).